The following is a 760-amino-acid chain: Xaa-Pro dipeptidyl-peptidase (760 aa).

Active-site charge relay system residues include S349, D469, and H499.

This sequence belongs to the peptidase S15 family. As to quaternary structure, homodimer.

The protein localises to the cytoplasm. It catalyses the reaction Hydrolyzes Xaa-Pro-|- bonds to release unblocked, N-terminal dipeptides from substrates including Ala-Pro-|-p-nitroanilide and (sequentially) Tyr-Pro-|-Phe-Pro-|-Gly-Pro-|-Ile.. Functionally, removes N-terminal dipeptides sequentially from polypeptides having unsubstituted N-termini provided that the penultimate residue is proline. The protein is Xaa-Pro dipeptidyl-peptidase of Streptococcus pyogenes serotype M2 (strain MGAS10270).